A 300-amino-acid polypeptide reads, in one-letter code: tRNA dimethylallyltransferase (300 aa).

11 to 18 (GPTAVGKS) is a binding site for ATP. 13–18 (TAVGKS) serves as a coordination point for substrate. Residues 35–38 (DSIQ) form an interaction with substrate tRNA region.

It belongs to the IPP transferase family. In terms of assembly, monomer. It depends on Mg(2+) as a cofactor.

It carries out the reaction adenosine(37) in tRNA + dimethylallyl diphosphate = N(6)-dimethylallyladenosine(37) in tRNA + diphosphate. Functionally, catalyzes the transfer of a dimethylallyl group onto the adenine at position 37 in tRNAs that read codons beginning with uridine, leading to the formation of N6-(dimethylallyl)adenosine (i(6)A). This chain is tRNA dimethylallyltransferase, found in Borrelia duttonii (strain Ly).